The sequence spans 192 residues: Fe/S biogenesis protein NfuA (192 aa).

[4Fe-4S] cluster-binding residues include Cys150 and Cys153.

The protein belongs to the NfuA family. As to quaternary structure, homodimer. [4Fe-4S] cluster is required as a cofactor.

In terms of biological role, involved in iron-sulfur cluster biogenesis. Binds a 4Fe-4S cluster, can transfer this cluster to apoproteins, and thereby intervenes in the maturation of Fe/S proteins. Could also act as a scaffold/chaperone for damaged Fe/S proteins. This Buchnera aphidicola subsp. Acyrthosiphon pisum (strain 5A) protein is Fe/S biogenesis protein NfuA.